The chain runs to 341 residues: Phenylalanine--tRNA ligase alpha subunit (341 aa).

Residue glutamate 256 coordinates Mg(2+).

It belongs to the class-II aminoacyl-tRNA synthetase family. Phe-tRNA synthetase alpha subunit type 1 subfamily. Tetramer of two alpha and two beta subunits. It depends on Mg(2+) as a cofactor.

Its subcellular location is the cytoplasm. The enzyme catalyses tRNA(Phe) + L-phenylalanine + ATP = L-phenylalanyl-tRNA(Phe) + AMP + diphosphate + H(+). The protein is Phenylalanine--tRNA ligase alpha subunit of Leptospira borgpetersenii serovar Hardjo-bovis (strain JB197).